A 489-amino-acid polypeptide reads, in one-letter code: MAAAALSRTLLPEARRRLWGFTRRLPLRRAAAQPLYFGGDRLRSTQAAPQVVLNVPETQVTCLENGLRVASENSGLSTCTVGLWIDAGSRYENEKNNGTAHFLEHMAFKGTKKRSQLDLELEIENMGAHLNAYTSREQTVYYAKAFSRDLPRAVEILADIIQNSTLGEAEIERERGVILREMQEVETNLQEVVFDYLHATAYQNTALGRTILGPTENIKSINRKDLVDYITTHYKGPRIVLAAAGGVCHNELLELAKFHFGDSLCSHKGAIPALPPCKFTGSEIRVRDDKMPLAHLAIAVEAVGWAHPDTICLMVANTLIGNWDRSFGGGMNLSSKLAQLTCHGNLCHSFQSFNTSYTDTGLWGLYMVCEQATVADMLHVVQNEWKRLCTDVTESEVARAKNLLKTNMLLQLDGSTPICEDIGRQMLCYNRRIPIPELEARIDAVDAETVRRVCTKYIHDKSPAIAALGPIERLPDFNQICSNMRWIRD.

The N-terminal 45 residues, 1 to 45 (MAAAALSRTLLPEARRRLWGFTRRLPLRRAAAQPLYFGGDRLRST), are a transit peptide targeting the mitochondrion. His-101 is a Zn(2+) binding site. The active-site Proton acceptor is the Glu-104. Residues His-105 and Glu-181 each coordinate Zn(2+).

The protein belongs to the peptidase M16 family. Heterodimer of PMPCA (alpha) and PMPCB (beta) subunits, forming the mitochondrial processing protease (MPP) in which PMPCA is involved in substrate recognition and binding and PMPCB is the catalytic subunit. Requires Zn(2+) as cofactor.

It is found in the mitochondrion matrix. It catalyses the reaction Release of N-terminal transit peptides from precursor proteins imported into the mitochondrion, typically with Arg in position P2.. Its activity is regulated as follows. Binding to PMPCA is required for catalytic activity. Its function is as follows. Catalytic subunit of the essential mitochondrial processing protease (MPP), which cleaves the mitochondrial sequence off newly imported precursors proteins. Preferentially, cleaves after an arginine at position P2. Required for PINK1 turnover by coupling PINK1 mitochondrial import and cleavage, which results in subsequent PINK1 proteolysis. The polypeptide is Mitochondrial-processing peptidase subunit beta (Pmpcb) (Mus musculus (Mouse)).